The sequence spans 607 residues: Transporter aclS (607 aa).

A run of 12 helical transmembrane segments spans residues 67-87 (LGGSLVASSLSVWQTMVAVVL), 91-111 (IAAIVAILIGYIGAEWHIGFP), 152-172 (LTVVGFAFQSYTGGLCVTAIL), 192-212 (VTTQQIIGWAIFNIISIPVLY), 221-241 (LMIGMNIMSFAALLGIMIWSL), 262-282 (SLGFGIMQGITTVVGTLSIAL), 317-337 (VFGQWFTFIIIGSIMPLFGCL), 364-384 (AAAVFAGIGLVSSQLALNVVD), 423-443 (GCYVGLILGMALCPWELLASA), 445-465 (TFVSVISSFSIFMAPFCGIHI), 500-520 (GVLPWLVGWVPLLPGFMHSIN), and 531-551 (HLYALGFPYGLLSSMAIHTLV). Residues 583-607 (NKDSTEEDSDRSLRRESREVVETKV) are disordered. The segment covering 592–607 (DRSLRRESREVVETKV) has biased composition (basic and acidic residues).

This sequence belongs to the purine-cytosine permease (2.A.39) family.

Its subcellular location is the membrane. Transporter; part of the gene cluster that mediates the biosynthesis of aspirochlorine (or antibiotic A30641), an unusual halogenated spiro compound with distinctive antifungal properties due to selective inhibition of protein biosynthesis, and which is also active against bacteria, viruses, and murine tumor cells. The polypeptide is Transporter aclS (Aspergillus oryzae (strain ATCC 42149 / RIB 40) (Yellow koji mold)).